The sequence spans 205 residues: Meiotic nuclear division protein 1 homolog (205 aa).

Residue Ser2 is modified to N-acetylserine. Positions 84 to 173 form a coiled coil; sequence HKLEVLESQL…EAANRWTDNI (90 aa).

This sequence belongs to the MND1 family. Heterodimer with PSMC3IP/HOP2. MND1-PSMC3IP interacts with DMC1 and RAD51 and binds preferentially to dsDNA.

Its subcellular location is the nucleus. Its function is as follows. Required for proper homologous chromosome pairing and efficient cross-over and intragenic recombination during meiosis. Stimulates both DMC1- and RAD51-mediated homologous strand assimilation, which is required for the resolution of meiotic double-strand breaks. In Homo sapiens (Human), this protein is Meiotic nuclear division protein 1 homolog.